Reading from the N-terminus, the 571-residue chain is MRVSKYLLSTQKETPANAEVISHQLMLRAGMIRRNASGLYTWLPSGLRVLRKVEAIVREEMNKTGAIEILMPLVQPADLWVETGRWDKFGPELLRFQDRNNRDFVLGPTHEEVITDLVRKELSSYKQLPLTLYQVQTKFRDEVRPRFGVMRAREFLMKDAYSFHLDQETMDNTYHAMHTAYSNILTRMGLSFRPVLADTGSIGGSMSHEFHVLANSGEDLIAYSTGSDYAANIEKAESPMPTHTLAAPTEAMTLVDTPNAKTIAELVEQFNVVITKTVKTLIVKGATDEVPLVALVIRGDHELNEIKADKLELVASPFEFASETEIRAAVGAGPGSIGPVGLTMPIIVDHSVTVMSDFAAGANAEDKHYFGINWDRDLPLATAADIRNVVEGEPTPDGLGTYAMARGIEVGHIFQLGTSYSKSMNATVLDENGKAQVLLMGCYGVGVSRIVAAAIEQNNDDRGITWPEAIAPFTVGILPMNMHKSHRVADIAEKLYQDLADAGVEVLMDDRKERPGVMFADMELIGLPHVVVIGDRNIDAGVFEYKNRRTGEKQDIPFDEIVAFLTNAAKG.

It belongs to the class-II aminoacyl-tRNA synthetase family. ProS type 1 subfamily. Homodimer.

Its subcellular location is the cytoplasm. It carries out the reaction tRNA(Pro) + L-proline + ATP = L-prolyl-tRNA(Pro) + AMP + diphosphate. Catalyzes the attachment of proline to tRNA(Pro) in a two-step reaction: proline is first activated by ATP to form Pro-AMP and then transferred to the acceptor end of tRNA(Pro). As ProRS can inadvertently accommodate and process non-cognate amino acids such as alanine and cysteine, to avoid such errors it has two additional distinct editing activities against alanine. One activity is designated as 'pretransfer' editing and involves the tRNA(Pro)-independent hydrolysis of activated Ala-AMP. The other activity is designated 'posttransfer' editing and involves deacylation of mischarged Ala-tRNA(Pro). The misacylated Cys-tRNA(Pro) is not edited by ProRS. The protein is Proline--tRNA ligase of Shewanella frigidimarina (strain NCIMB 400).